We begin with the raw amino-acid sequence, 291 residues long: ATP synthase gamma chain (291 aa).

The protein belongs to the ATPase gamma chain family. As to quaternary structure, F-type ATPases have 2 components, CF(1) - the catalytic core - and CF(0) - the membrane proton channel. CF(1) has five subunits: alpha(3), beta(3), gamma(1), delta(1), epsilon(1). CF(0) has three main subunits: a, b and c.

The protein resides in the cell inner membrane. Functionally, produces ATP from ADP in the presence of a proton gradient across the membrane. The gamma chain is believed to be important in regulating ATPase activity and the flow of protons through the CF(0) complex. The polypeptide is ATP synthase gamma chain (Sulfurihydrogenibium sp. (strain YO3AOP1)).